The following is a 130-amino-acid chain: Small ribosomal subunit protein uS9 (130 aa).

The segment at threonine 105 to arginine 130 is disordered. A compositionally biased stretch (basic residues) spans lysine 111–arginine 130.

It belongs to the universal ribosomal protein uS9 family.

This Lysinibacillus sphaericus (strain C3-41) protein is Small ribosomal subunit protein uS9.